The following is a 642-amino-acid chain: MYPASPSAGPALHPVPHRARLPRPRCLAEPPRSPAPGPGSTARPPPPAPGPRPRVAVKMTFRKAYSIKDKLQAIERVKGGERQASVCRDFGVPGGTLRGWLKDEPKLRWFLDQLGGEVGTQRKKMRLANEEEIDRAVYSWFLTLRQHGVPLSGPVIQAQAEAFARQIYGPECTFKASHGWFWRWQKRHGISSQRIYGEAEPPVAGPAPVKEEPAQPSSAGLLLDGTPATLPHSEGGYGDEQIYNANVTGLYWRLLPEQNATPGTGDSREPGECSRRWCSDRVTVLLAANLTGSHKLKPLVIGQLPDPPSLRHHNQDKFPASYRYSPDAWLSRPLLRGWFFEEFVPGVKRYLRRSCLQQKAVLLVAHPPCPSWTTSMPAVEESEGTPRQCQPELLGSPEELQTPDGAVRVLFLSRGNSRAHIPAPLEHGVVAAFKHLYKRELLRLAVSCASGSPLDFMRSFMLKDMLYLAGLSWDLVQAGSIERCWLLGLRAAFEPGQQPAHQVEEAAEHSRMLSDLTHLAALAYKRLAPEEVAEWLHLDDDGGLPEGCGEEVAPAAPPSPASLPSSIGAGEEEEEEATEQGGVLVPTAGEAVWGLETALRWLESQDPREVGPLRLVQLRSLITMARRLGGIGPSAAASDDGV.

Residues 1–54 (MYPASPSAGPALHPVPHRARLPRPRCLAEPPRSPAPGPGSTARPPPPAPGPRPR) are disordered. Positions 31–52 (PRSPAPGPGSTARPPPPAPGPR) are enriched in pro residues. Positions 56–107 (AVKMTFRKAYSIKDKLQAIERVKGGERQASVCRDFGVPGGTLRGWLKDEPKL) constitute an HTH psq-type domain. 2 consecutive DNA-binding regions (H-T-H motif) follow at residues 83–103 (QASV…WLKD) and 154–187 (PVIQ…WQKR). The HTH CENPB-type domain maps to 121 to 194 (QRKKMRLANE…QKRHGISSQR (74 aa)). Over residues 198-208 (EAEPPVAGPAP) the composition is skewed to low complexity. The tract at residues 198–230 (EAEPPVAGPAPVKEEPAQPSSAGLLLDGTPATL) is disordered. The 126-residue stretch at 239–364 (DEQIYNANVT…CLQQKAVLLV (126 aa)) folds into the DDE-1 domain. The disordered stretch occupies residues 543–583 (GLPEGCGEEVAPAAPPSPASLPSSIGAGEEEEEEATEQGGV).

This sequence belongs to the tigger transposable element derived protein family.

Its subcellular location is the nucleus. This is Tigger transposable element derived 5 (Tigd5) from Rattus norvegicus (Rat).